The primary structure comprises 86 residues: Small ribosomal subunit protein uS17 (86 aa).

The protein belongs to the universal ribosomal protein uS17 family. As to quaternary structure, part of the 30S ribosomal subunit.

Its function is as follows. One of the primary rRNA binding proteins, it binds specifically to the 5'-end of 16S ribosomal RNA. The protein is Small ribosomal subunit protein uS17 of Dehalococcoides mccartyi (strain ATCC BAA-2266 / KCTC 15142 / 195) (Dehalococcoides ethenogenes (strain 195)).